We begin with the raw amino-acid sequence, 908 residues long: Isoleucine--tRNA ligase (908 aa).

The short motif at 59 to 69 (PYANGDLHIGH) is the 'HIGH' region element. Glutamate 554 contributes to the L-isoleucyl-5'-AMP binding site. The 'KMSKS' region motif lies at 595-599 (KMSKS). Lysine 598 contacts ATP. Residues cysteine 882, cysteine 885, cysteine 898, and cysteine 901 each contribute to the Zn(2+) site.

This sequence belongs to the class-I aminoacyl-tRNA synthetase family. IleS type 1 subfamily. As to quaternary structure, monomer. Requires Zn(2+) as cofactor.

It localises to the cytoplasm. It carries out the reaction tRNA(Ile) + L-isoleucine + ATP = L-isoleucyl-tRNA(Ile) + AMP + diphosphate. Catalyzes the attachment of isoleucine to tRNA(Ile). As IleRS can inadvertently accommodate and process structurally similar amino acids such as valine, to avoid such errors it has two additional distinct tRNA(Ile)-dependent editing activities. One activity is designated as 'pretransfer' editing and involves the hydrolysis of activated Val-AMP. The other activity is designated 'posttransfer' editing and involves deacylation of mischarged Val-tRNA(Ile). The polypeptide is Isoleucine--tRNA ligase (Mesoplasma florum (strain ATCC 33453 / NBRC 100688 / NCTC 11704 / L1) (Acholeplasma florum)).